A 174-amino-acid polypeptide reads, in one-letter code: Adenine phosphoribosyltransferase (174 aa).

It belongs to the purine/pyrimidine phosphoribosyltransferase family. Homodimer.

Its subcellular location is the cytoplasm. The enzyme catalyses AMP + diphosphate = 5-phospho-alpha-D-ribose 1-diphosphate + adenine. The protein operates within purine metabolism; AMP biosynthesis via salvage pathway; AMP from adenine: step 1/1. Its function is as follows. Catalyzes a salvage reaction resulting in the formation of AMP, that is energically less costly than de novo synthesis. This chain is Adenine phosphoribosyltransferase, found in Nitrosomonas eutropha (strain DSM 101675 / C91 / Nm57).